The sequence spans 363 residues: MKTICLIGGKLQGFEAAYLSKKADMKVVVIDKNPQALIRNYADEFHCFDVIKEPEKLLEISKNVDAILPVNENLECIKFLSSVKEEFSCPVLFDFEAYRISRDKKKSKEYFRSIGIPTPQDKPGRPPYFVKPPCESSSVGARIIYDEEELGELEPGMLVEEYVEGEVISLEVIGDGTHFAVVKETLIHIDRTYDCHMVTPLPSDLSFREISYSLAANLPLKGIMDVEAISGPQGLKVIEIDSRFPSQTPTAVYYSSGVNLIELLFRAFGEGVEEVKTLPEDRYCIYEHLMLAENGALIPVGEQVLSMGNDYGKYYEEPGIEIFLCRGEDPVFTLVFWGKDREEAENKKRTGLLILKDRFGAAV.

Lys-10 contacts ATP. 11-12 (LQ) contributes to the L-lysine binding site. Residues Asp-31, 49–50 (DV), and 72–73 (EN) each bind ATP. Glu-72 lines the L-lysine pocket. In terms of domain architecture, ATP-grasp spans 85 to 269 (EEFSCPVLFD…LIELLFRAFG (185 aa)). Residues Lys-104, Lys-131, Ser-138, and 160–163 (EEYV) contribute to the ADP site. Residues 169–171 (SLE) and Asp-225 contribute to the D-ornithine site. Residues Glu-227, Glu-239, and Asp-241 each contribute to the Mg(2+) site. Glu-239 is a binding site for ADP. Residues 243–248 (RFPSQT) and Glu-302 contribute to the D-ornithine site. The L-lysine site is built by Ser-246 and Glu-302.

It belongs to the PylC family. Mg(2+) serves as cofactor.

It carries out the reaction (3R)-3-methyl-D-ornithine + L-lysine + ATP = (3R)-3-methyl-D-ornithyl-N(6)-L-lysine + ADP + phosphate + H(+). Its pathway is amino-acid biosynthesis; L-pyrrolysine biosynthesis. Functionally, is required for the biosynthesis of pyrrolysine. Catalyzes the ATP-dependent ligation between (3R)-3-methyl-D-ornithine and L-lysine, leading to (3R)-3-methyl-D-ornithyl-N6-L-lysine. In Methanosarcina acetivorans (strain ATCC 35395 / DSM 2834 / JCM 12185 / C2A), this protein is 3-methyl-D-ornithine--L-lysine ligase.